A 286-amino-acid chain; its full sequence is DegV domain-containing protein SPs1668 (286 aa).

A DegV domain is found at Phe3 to Gly282. Hexadecanoate contacts are provided by Thr62 and Ser94.

Functionally, may bind long-chain fatty acids, such as palmitate, and may play a role in lipid transport or fatty acid metabolism. In Streptococcus pyogenes serotype M3 (strain SSI-1), this protein is DegV domain-containing protein SPs1668.